Consider the following 501-residue polypeptide: Actin nucleation-promoting factor WASL (501 aa).

At S2 the chain carries N-acetylserine. The WH1 domain occupies 31–138; it reads LGKKCVTMSS…KAVTDLLGRR (108 aa). The disordered stretch occupies residues 135–158; it reads LGRRQRKSEKRRDAPNGPNLPMAT. The 14-residue stretch at 200-213 folds into the CRIB domain; the sequence is IGTPSNFQHIGHVG. At S239 the chain carries Phosphoserine; by TNK2. Position 253 is a phosphotyrosine; by FAK1 and TNK2 (Y253). 2 disordered regions span residues 263–403 and 442–501; these read EAVK…GNKA and QLKS…EWED. Residues 273–387 show a composition bias toward pro residues; the sequence is APPPPPPSRG…PPGPPPPPGL (115 aa). R304 bears the Omega-N-methylarginine mark. WH2 domains lie at 401–418 and 429–446; these read NKAA…LKKV and GRDA…LKSV. Polar residues predominate over residues 442 to 453; it reads QLKSVSDGQEST. Residues S480 and S481 each carry the phosphoserine modification. Residues 482–501 show a composition bias toward acidic residues; it reads DEDEDDDDEEDFEDDDEWED.

As to quaternary structure, binds actin and the Arp2/3 complex. Interacts with CDC42. Interacts with FCHSD1. Interacts with FCHSD2. Binds to SH3 domains of GRB2. Interacts with the C-terminal SH3 domain of DNMBP. Interacts with SNX9. Interacts with the WW domains of PRPF40A/FBP11. Interacts with PTK2/FAK1. Interacts with PACSIN1, PACSIN2 and PACSIN3. Interacts with NOSTRIN. Binds to TNK2. Interacts with SNX33. Interacts with NONO (via second RRM domain); the interaction is direct. Component of a multiprotein complex with NONO and SFPQ; associates with the complex via direct interaction with NONO. Phosphorylation at Ser-239, Tyr-253, Ser-480 and Ser-481 enhances actin polymerization activity.

It is found in the cytoplasm. The protein localises to the cytoskeleton. It localises to the nucleus. Functionally, regulates actin polymerization by stimulating the actin-nucleating activity of the Arp2/3 complex. Involved in various processes, such as mitosis and cytokinesis, via its role in the regulation of actin polymerization. Together with CDC42, involved in the extension and maintenance of the formation of thin, actin-rich surface projections called filopodia. In addition to its role in the cytoplasm, also plays a role in the nucleus by regulating gene transcription, probably by promoting nuclear actin polymerization. Binds to HSF1/HSTF1 and forms a complex on heat shock promoter elements (HSE) that negatively regulates HSP90 expression. Plays a role in dendrite spine morphogenesis. This chain is Actin nucleation-promoting factor WASL (Wasl), found in Mus musculus (Mouse).